The chain runs to 196 residues: MSYYAFEGLIPVVHPTAFVHPSAVLIGDVIVGAGVYIGPLASLRGDYGRLIVQAGANIQDGCIMHGYCDTDTIVGENGHIGHGAILHGCVIGRDALVGMNSVIMDGAVIGEESIVAAMSFVKAGFRGEKRQLLMGTPARAVRSVSDDELHWKRLNTKEYQDLVGRCHASLHETQPLRQMEENRPRLQGTTDVMPKR.

The disordered stretch occupies residues 177-196; it reads RQMEENRPRLQGTTDVMPKR.

This sequence belongs to the transferase hexapeptide repeat family.

It functions in the pathway amine and polyamine metabolism; carnitine metabolism. Its function is as follows. Overproduction of CaiE stimulates the activity of CaiB and CaiD. The polypeptide is Carnitine operon protein CaiE (Escherichia coli O17:K52:H18 (strain UMN026 / ExPEC)).